A 512-amino-acid chain; its full sequence is MKAGCSMVEKPEGGGGYQFPDWAYKTESSPGSXXIQLWHFILELLQKEEFRHVIAWQQGEYGEFVIKDPDEVARLWGRRKCKPQMNYDKLSRALRYYYNKRILHKTKGKRFTYKFNFNKLVMPNYPFINIRSSGVVPQSAPPVPTASSRFHFPPLDTHSPTSDVQPGRFSASSLTASGQESSNGTDRKAELSXLEDGSAADWRRGVDLMSSRNAVGGGGISHQKRKPDIMLPLFARPGMYPDPHSPFAVSPIPGRGGVLNVPISPALSLTPTIFSYSPSPGLSPFTSSSCFSFNPEEMKHYLHSQACSVFNYHLSPRTFPRYPGLMVPPLQCQMHPEESTQFSIKLQPPPVGRKNRERVESSEESAPVTVPTMAPIPPRIKVEPASEKDAESLRQSAREKEEHTXEEGTVPSRTIEEEKGTIFARPAAPPIWPSVPISTPSEEPLEVTEDIEDRPGKEPSAPEKKEDALMPPKLRLKRRWNDDPEARELSKSGKFLWNGSGPQGLATAAADA.

The segment at residues 35–116 (IQLWHFILEL…KGKRFTYKFN (82 aa)) is a DNA-binding region (ETS). The tract at residues 138–196 (QSAPPVPTASSRFHFPPLDTHSPTSDVQPGRFSASSLTASGQESSNGTDRKAELSXLED) is disordered. Ser-139, Ser-159, and Ser-315 each carry phosphoserine. Residues 158-184 (HSPTSDVQPGRFSASSLTASGQESSNG) show a composition bias toward polar residues. Positions 341–512 (QFSIKLQPPP…QGLATAAADA (172 aa)) are disordered. The span at 380-406 (IKVEPASEKDAESLRQSAREKEEHTXE) shows a compositional bias: basic and acidic residues. A Glycyl lysine isopeptide (Lys-Gly) (interchain with G-Cter in SUMO2) cross-link involves residue Lys-381. Residue Lys-388 is modified to N6-acetyllysine; alternate. Residue Lys-388 forms a Glycyl lysine isopeptide (Lys-Gly) (interchain with G-Cter in SUMO2); alternate linkage. Over residues 443–452 (EPLEVTEDIE) the composition is skewed to acidic residues. 2 stretches are compositionally biased toward basic and acidic residues: residues 453–468 (DRPG…KEDA) and 479–491 (RWND…ELSK).

Belongs to the ETS family.

The protein resides in the nucleus. Transcriptional repressor that contribute to growth arrest during terminal macrophage differentiation by repressing target genes involved in Ras-dependent proliferation. Represses MMP1 promoter activity. This Ateles geoffroyi (Black-handed spider monkey) protein is ETS translocation variant 3 (ETV3).